We begin with the raw amino-acid sequence, 348 residues long: UPF0283 membrane protein HAPS_0079 (348 aa).

3 helical membrane-spanning segments follow: residues 57–77, 86–106, and 203–223; these read FLAA…QWLI, IYFA…GAII, and ENAI…MVAW.

Belongs to the UPF0283 family.

The protein localises to the cell inner membrane. This chain is UPF0283 membrane protein HAPS_0079, found in Glaesserella parasuis serovar 5 (strain SH0165) (Haemophilus parasuis).